The sequence spans 347 residues: Protein pelota homolog (347 aa).

Belongs to the eukaryotic release factor 1 family. Pelota subfamily. As to quaternary structure, monomer. A divalent metal cation is required as a cofactor.

The protein localises to the cytoplasm. Functionally, may function in recognizing stalled ribosomes, interact with stem-loop structures in stalled mRNA molecules, and effect endonucleolytic cleavage of the mRNA. May play a role in the release non-functional ribosomes and degradation of damaged mRNAs. Has endoribonuclease activity. This is Protein pelota homolog from Methanocaldococcus jannaschii (strain ATCC 43067 / DSM 2661 / JAL-1 / JCM 10045 / NBRC 100440) (Methanococcus jannaschii).